Reading from the N-terminus, the 501-residue chain is Cystine/glutamate transporter (501 aa).

Over 1-43 (MVRKPVVSTISKGGYLQGNVNGRLPSLGNKEPPGQEKVQLKRK) the chain is Cytoplasmic. S26 is subject to Phosphoserine. Residues 44–64 (VTLLRGVSIIIGTIIGAGIFI) form a helical membrane-spanning segment. Topologically, residues 65–74 (SPKGVLQNTG) are extracellular. The chain crosses the membrane as a helical span at residues 75-95 (SVGMSLTIWTVCGVLSLFGAL). Over 96–101 (SYAELG) the chain is Cytoplasmic. Residues 102–116 (TTIKKSGGHYTYILE) lie within the membrane without spanning it. Residues 117-130 (VFGPLPAFVRVWVE) are Cytoplasmic-facing. The chain crosses the membrane as a helical span at residues 131–150 (LLIIRPAATAVISLAFGRYI). Residue R135 participates in L-glutamate binding. The Extracellular segment spans residues 151–163 (LEPFFIQCEIPEL). Residues 164 to 179 (AIKLITAVGITVVMVL) traverse the membrane as a helical segment. Over 180–193 (NSMSVSWSARIQIF) the chain is Cytoplasmic. A helical membrane pass occupies residues 194–210 (LTFCKLTAILIIIVPGV). At 211-234 (MQLIKGQTQNFKDAFSGRDSSITR) the chain is on the extracellular side. Residues 235–255 (LPLAFYYGMYAYAGWFYLNFV) traverse the membrane as a helical segment. Y244 is a binding site for L-glutamate. Residues 256 to 265 (TEEVENPEKT) are Cytoplasmic-facing. The chain crosses the membrane as a helical span at residues 266 to 286 (IPLAICISMAIVTIGYVLTNV). Over 287-317 (AYFTTINAEELLLSNAVAVTFSERLLGNFSL) the chain is Extracellular. N314 carries an N-linked (GlcNAc...) asparagine glycan. The chain crosses the membrane as a helical span at residues 318 to 338 (AVPIFVALSCFGSMNGGVFAV). The Cytoplasmic segment spans residues 339-364 (SRLFYVASREGHLPEILSMIHVRKHT). Residues 365–385 (PLPAVIVLHPLTMIMLFSGDL) traverse the membrane as a helical segment. At 386–387 (DS) the chain is on the extracellular side. The helical transmembrane segment at 388–408 (LLNFLSFARWLFIGLAVAGLI) threads the bilayer. Over 409–422 (YLRYKCPDMHRPFK) the chain is Cytoplasmic. A helical transmembrane segment spans residues 423 to 443 (VPLFIPALFSFTCLFMVALSL). At 444–449 (YSDPFS) the chain is on the extracellular side. Residues 450–470 (TGIGSVITLTGVPAYYLFIIW) form a helical membrane-spanning segment. The Cytoplasmic portion of the chain corresponds to 471-501 (DKKPRWFRIMSEKITRTLQIILEVVPEEDKL).

The protein belongs to the amino acid-polyamine-organocation (APC) superfamily. L-type amino acid transporter (LAT) (TC 2.A.3.8) family. Disulfide-linked heterodimer with the amino acid transport protein SLC3A2/4F2hc; this interaction mediates cell membrane localization.

It is found in the cell membrane. The protein resides in the cell projection. The protein localises to the microvillus membrane. The catalysed reaction is L-cystine(out) + L-glutamate(in) = L-cystine(in) + L-glutamate(out). The enzyme catalyses an L-alpha-amino acid(in) + L-kynurenine(out) = an L-alpha-amino acid(out) + L-kynurenine(in). It carries out the reaction N-acetyl-L-cysteine(out) + L-glutamate(in) = N-acetyl-L-cysteine(in) + L-glutamate(out). Its function is as follows. Heterodimer with SLC3A2, that functions as an antiporter by mediating the exchange of extracellular anionic L-cystine and intracellular L-glutamate across the cellular plasma membrane. Provides L-cystine for the maintenance of the redox balance between extracellular L-cystine and L-cysteine and for the maintenance of the intracellular levels of glutathione that is essential for cells protection from oxidative stress. The transport is sodium-independent, electroneutral with a stoichiometry of 1:1, and is drove by the high intracellular concentration of L-glutamate and the intracellular reduction of L-cystine. In addition, mediates the import of L-kynurenine leading to anti-ferroptotic signaling propagation required to maintain L-cystine and glutathione homeostasis. Moreover, mediates N-acetyl-L-cysteine uptake into the placenta leading to subsequently down-regulation of pathways associated with oxidative stress, inflammation and apoptosis. In vitro can also transport L-aspartate. May participate in astrocyte and meningeal cell proliferation during development and can provide neuroprotection by promoting glutathione synthesis and delivery from non-neuronal cells such as astrocytes and meningeal cells to immature neurons. Controls the production of pheomelanin pigment directly. The protein is Cystine/glutamate transporter of Pongo abelii (Sumatran orangutan).